The chain runs to 286 residues: uncharacterized protein (286 aa).

6 helical membrane-spanning segments follow: residues 52-74 (ILWT…LIGL), 79-101 (LIAI…FLFL), 142-161 (WWDP…VSFF), 168-190 (VLVF…GAIL), 203-225 (IQAT…VALV), and 257-276 (IIWI…ASFM).

The protein resides in the cell membrane. This is an uncharacterized protein from Archaeoglobus fulgidus (strain ATCC 49558 / DSM 4304 / JCM 9628 / NBRC 100126 / VC-16).